The chain runs to 220 residues: Phosphoenolpyruvate guanylyltransferase (220 aa).

Positions 154, 169, and 172 each coordinate phosphoenolpyruvate.

It belongs to the CofC family.

It carries out the reaction phosphoenolpyruvate + GTP + H(+) = enolpyruvoyl-2-diphospho-5'-guanosine + diphosphate. The protein operates within cofactor biosynthesis; coenzyme F420 biosynthesis. Its function is as follows. Guanylyltransferase that catalyzes the activation of phosphoenolpyruvate (PEP) as enolpyruvoyl-2-diphospho-5'-guanosine, via the condensation of PEP with GTP. It is involved in the biosynthesis of coenzyme F420, a hydride carrier cofactor. The polypeptide is Phosphoenolpyruvate guanylyltransferase (Mycolicibacterium paratuberculosis (strain ATCC BAA-968 / K-10) (Mycobacterium paratuberculosis)).